The sequence spans 286 residues: Shikimate dehydrogenase (NADP(+)) (286 aa).

Shikimate-binding positions include 19–21 (SLS) and Thr66. The active-site Proton acceptor is the Lys70. 2 residues coordinate shikimate: Asn91 and Asp107. Residues 129-133 (GSGGA) and Leu229 each bind NADP(+). A shikimate-binding site is contributed by Tyr231. An NADP(+)-binding site is contributed by Gly252.

This sequence belongs to the shikimate dehydrogenase family. In terms of assembly, homodimer.

It carries out the reaction shikimate + NADP(+) = 3-dehydroshikimate + NADPH + H(+). The protein operates within metabolic intermediate biosynthesis; chorismate biosynthesis; chorismate from D-erythrose 4-phosphate and phosphoenolpyruvate: step 4/7. Involved in the biosynthesis of the chorismate, which leads to the biosynthesis of aromatic amino acids. Catalyzes the reversible NADPH linked reduction of 3-dehydroshikimate (DHSA) to yield shikimate (SA). This Prochlorococcus marinus (strain AS9601) protein is Shikimate dehydrogenase (NADP(+)).